Here is a 705-residue protein sequence, read N- to C-terminus: Polyribonucleotide nucleotidyltransferase (705 aa).

Mg(2+)-binding residues include aspartate 487 and aspartate 493. The KH domain occupies 554–613 (PKILTMAIEPDKIRDVIGPSGKQINQIIDETGVKIDIEQDGSIFISSTDNEMNKKAKQII). Positions 623 to 691 (GQIYLGKVKR…RQGRVNLSRK (69 aa)) constitute an S1 motif domain.

It belongs to the polyribonucleotide nucleotidyltransferase family. Mg(2+) serves as cofactor.

It is found in the cytoplasm. It catalyses the reaction RNA(n+1) + phosphate = RNA(n) + a ribonucleoside 5'-diphosphate. In terms of biological role, involved in mRNA degradation. Catalyzes the phosphorolysis of single-stranded polyribonucleotides processively in the 3'- to 5'-direction. This chain is Polyribonucleotide nucleotidyltransferase, found in Oceanobacillus iheyensis (strain DSM 14371 / CIP 107618 / JCM 11309 / KCTC 3954 / HTE831).